We begin with the raw amino-acid sequence, 259 residues long: MSTLSRNALPLEGQVAVVTGGAHGIGLGIVERLLGLGARVTASDIDESGLSLLCERLAAKHADAIAVHAADLSEEQGAQGLHRAAVERFGSVQILVNCAGGGVIRPFLEHTPETLKATIDRNLWTALWCSRVFLPDMLARQYGRIINIGADSVRNGLPDHAAYNAAKGGMHGLTTGLAREFARQGVTVNTVAPCAVNTEVWVRIKNANPELAQRFLDVIPMGRVGEIEEVASMVGYLAQPEAAFVTGQVISVNGGSTML.

Position 18–42 (valine 18–alanine 42) interacts with NAD(+). The active-site Proton acceptor is tyrosine 163.

It belongs to the short-chain dehydrogenases/reductases (SDR) family.

It carries out the reaction (2R,3S)-2,3-dihydroxy-2,3-dihydro-p-cumate + NAD(+) = 2,3-dihydroxy-p-cumate + NADH + H(+). It participates in aromatic compound metabolism; p-cumate degradation; acetaldehyde and pyruvate from p-cumate: step 2/7. This Pseudomonas putida (strain ATCC 700007 / DSM 6899 / JCM 31910 / BCRC 17059 / LMG 24140 / F1) protein is 2,3-dihydroxy-2,3-dihydro-p-cumate dehydrogenase (cmtB).